Consider the following 424-residue polypeptide: UDP-N-acetylglucosamine 1-carboxyvinyltransferase (424 aa).

Residue 22 to 23 (KN) coordinates phosphoenolpyruvate. Arg93 contacts UDP-N-acetyl-alpha-D-glucosamine. Cys117 functions as the Proton donor in the catalytic mechanism. 2-(S-cysteinyl)pyruvic acid O-phosphothioketal is present on Cys117. Residues 162–165 (KVSV), Asp307, and Ile329 each bind UDP-N-acetyl-alpha-D-glucosamine.

Belongs to the EPSP synthase family. MurA subfamily.

It is found in the cytoplasm. It catalyses the reaction phosphoenolpyruvate + UDP-N-acetyl-alpha-D-glucosamine = UDP-N-acetyl-3-O-(1-carboxyvinyl)-alpha-D-glucosamine + phosphate. The protein operates within cell wall biogenesis; peptidoglycan biosynthesis. Cell wall formation. Adds enolpyruvyl to UDP-N-acetylglucosamine. This Glaesserella parasuis serovar 5 (strain SH0165) (Haemophilus parasuis) protein is UDP-N-acetylglucosamine 1-carboxyvinyltransferase.